The chain runs to 513 residues: Probable WRKY transcription factor 3 (513 aa).

Residues 1 to 11 (MAEKEEKEPSK) show a composition bias toward basic and acidic residues. 3 disordered regions span residues 1 to 26 (MAEK…ISLP), 175 to 281 (NVHM…PACP), and 297 to 394 (IIYK…VASS). Low complexity predominate over residues 179–201 (QQSQQSEYPSSTQQQQQQQQQAS). Residues 202-228 (LTEIPSFSSAPRSQIRASVQETSQGQR) are compositionally biased toward polar residues. The span at 229-240 (ETSEISVFEHRS) shows a compositional bias: basic and acidic residues. A DNA-binding region (WRKY 1) is located at residues 244-308 (NADKPADDGY…YKGQHNHELP (65 aa)). 2 stretches are compositionally biased toward polar residues: residues 311-335 (RGNN…SSLN) and 343-355 (TSQV…MSEA). A compositionally biased stretch (basic and acidic residues) spans 368 to 387 (VGERHEDEPDPKRRNTEVRV). The WRKY 2 DNA-binding region spans 409–474 (SEVDLLDDGY…YEGKHNHDVP (66 aa)).

In young, mature and senescent leaves.

It is found in the nucleus. Its function is as follows. Transcription factor. Interacts specifically with the W box (5'-(T)TGAC[CT]-3'), a frequently occurring elicitor-responsive cis-acting element. The polypeptide is Probable WRKY transcription factor 3 (WRKY3) (Arabidopsis thaliana (Mouse-ear cress)).